We begin with the raw amino-acid sequence, 129 residues long: Small ribosomal subunit protein uS9 (129 aa).

This sequence belongs to the universal ribosomal protein uS9 family.

The sequence is that of Small ribosomal subunit protein uS9 from Chlorobium phaeobacteroides (strain DSM 266 / SMG 266 / 2430).